Reading from the N-terminus, the 615-residue chain is 70 kDa neurofilament protein (615 aa).

A disordered region spans residues 1-31; it reads MSVTQKKTEISTTTTYEGESRPSSGMSGFSY. The tract at residues 1–99 is head; it reads MSVTQKKTEI…KANREREKQD (99 aa). Over residues 21-30 the composition is skewed to polar residues; it reads RPSSGMSGFS. Residues 96 to 449 enclose the IF rod domain; it reads EKQDMRDLNE…KLLEGEESRV (354 aa). Residues 100–135 form a coil 1A region; the sequence is MRDLNERFANYIEKVRFLEAQNKKLAGELEELKSKW. Positions 136 to 145 are linker 1; it reads GKETSAIKEM. Residues 146 to 284 are coil 1B; it reads YETELEEARK…VHAQELKELA (139 aa). Positions 285 to 303 are linker 12; that stretch reads ALAYRDTTAENREFWRNEL. The coil 2 stretch occupies residues 304–449; the sequence is AQAIRDIQQE…KLLEGEESRV (146 aa). The interval 450 to 615 is tail; the sequence is GMKQIVEQVV…ANYTQNTVYQ (166 aa). One can recognise an LTD domain in the interval 499-612; sequence AKTTYQRTSK…EDKANYTQNT (114 aa).

This sequence belongs to the intermediate filament family.

The protein is 70 kDa neurofilament protein of Doryteuthis pealeii (Longfin inshore squid).